A 2145-amino-acid polypeptide reads, in one-letter code: U5 small nuclear ribonucleoprotein 200 kDa helicase (2145 aa).

Disordered stretches follow at residues 54 to 82 (GDRA…AQQF) and 202 to 243 (DSDE…GDGH). Over residues 220–231 (SEEESEEEEGVD) the composition is skewed to acidic residues. Residues 484–667 (DSALRSKEHL…FLRVKPEHLH (184 aa)) form the Helicase ATP-binding 1 domain. ATP is bound at residue 497–504 (APTGAGKT). The DEAH box signature appears at 609–612 (DEIH). Residues 677–894 (PLEQQYIGVT…QMVSRLTDML (218 aa)) form the Helicase C-terminal domain. The 304-residue stretch at 975–1278 (TELGRIASHF…IGAETVLPIS (304 aa)) folds into the SEC63 1 domain. The Helicase ATP-binding 2 domain maps to 1331–1506 (RTVFESNENV…WLGCSASATF (176 aa)). An ATP-binding site is contributed by 1344–1351 (APNGSGKT). A DEAH box motif is present at residues 1448–1451 (DDLH). The SEC63 2 domain maps to 1812–2124 (LNLGMIASYY…YLGADQEFDV (313 aa)).

The protein belongs to the helicase family. SKI2 subfamily.

Its subcellular location is the nucleus. It carries out the reaction ATP + H2O = ADP + phosphate + H(+). In terms of biological role, catalyzes the ATP-dependent unwinding of U4/U6 RNA duplices, an essential step in the assembly of a catalytically active spliceosome. Plays a role in pre-mRNA splicing. The polypeptide is U5 small nuclear ribonucleoprotein 200 kDa helicase (Caenorhabditis elegans).